The following is a 351-amino-acid chain: Adenine deaminase (351 aa).

Residues H19, H21, and H208 each coordinate Zn(2+). The active-site Proton donor is E211. Position 288 (D288) interacts with Zn(2+). Residue D289 coordinates substrate.

Belongs to the metallo-dependent hydrolases superfamily. Adenosine and AMP deaminases family. Adenine deaminase type 2 subfamily. Zn(2+) serves as cofactor.

It localises to the cytoplasm. It is found in the nucleus. It carries out the reaction adenine + H2O + H(+) = hypoxanthine + NH4(+). In terms of biological role, catalyzes the hydrolytic deamination of adenine to hypoxanthine. Plays an important role in the purine salvage pathway and in nitrogen catabolism. This is Adenine deaminase (aah1) from Aspergillus oryzae (strain ATCC 42149 / RIB 40) (Yellow koji mold).